We begin with the raw amino-acid sequence, 229 residues long: C-type lectin domain family 1 member B (229 aa).

At 1-33 (MQDEDGYITLNIKTRKPALISVGSASSSWWRVM) the chain is on the cytoplasmic side. At Tyr7 the chain carries Phosphotyrosine. The ITAM signature appears at 7 to 10 (YITL). The chain crosses the membrane as a helical; Signal-anchor for type II membrane protein span at residues 34 to 54 (ALILLILCVGMVVGLVALGIW). At 55 to 229 (SVMQRNYLQG…AGMTKVDQLP (175 aa)) the chain is on the extracellular side. Asn68 is a glycosylation site (N-linked (GlcNAc...) asparagine). Residues Cys102 and Cys113 are joined by a disulfide bond. The C-type lectin domain maps to 109 to 217 (YGDSCYGFFR…CENKHYLMCE (109 aa)). N-linked (GlcNAc...) asparagine glycosylation is found at Asn120 and Asn134. 2 cysteine pairs are disulfide-bonded: Cys130–Cys216 and Cys195–Cys208.

As to quaternary structure, homodimer. Interacts (via cytoplasmic domain) with RACK1; promotes CLEC1B ubiquitination and proteasome-mediated degradation. Interacts (dimer) with SYK (via SH2 domains). Interacts with PDPN; the interaction is independent of CLEC1B glycosylation and activates CLEC1B. Post-translationally, glycosylated. In terms of processing, phosphorylated on tyrosine residue in response to rhodocytin binding. As to expression, expressed preferentially in the liver. Also expressed in immune cells of myeloid origin and on the surface of platelets.

The protein resides in the membrane. In terms of biological role, C-type lectin-like receptor that functions as a platelet receptor for the lymphatic endothelial marker, PDPN. After ligand activation, signals via sequential activation of SRC and SYK tyrosine kinases leading to activation of PLCG2. (Microbial infection) Acts as a receptor for the platelet-aggregating snake venom protein rhodocytin. Rhodocytin binding leads to tyrosine phosphorylation and this promotes the binding of spleen tyrosine kinase (SYK) and initiation of downstream tyrosine phosphorylation events and activation of PLCG2. Functionally, (Microbial infection) Acts as an attachment factor for Human immunodeficiency virus type 1 (HIV-1) and facilitates its capture by platelets. The protein is C-type lectin domain family 1 member B (CLEC1B) of Homo sapiens (Human).